We begin with the raw amino-acid sequence, 369 residues long: Flagellar P-ring protein (369 aa).

Residues 1–22 form the signal peptide; that stretch reads MFNVRQLIATTLLLSCAFAAQA.

It belongs to the FlgI family. The basal body constitutes a major portion of the flagellar organelle and consists of four rings (L,P,S, and M) mounted on a central rod.

The protein localises to the periplasm. Its subcellular location is the bacterial flagellum basal body. Functionally, assembles around the rod to form the L-ring and probably protects the motor/basal body from shearing forces during rotation. This Pseudomonas putida (strain ATCC 47054 / DSM 6125 / CFBP 8728 / NCIMB 11950 / KT2440) protein is Flagellar P-ring protein.